Reading from the N-terminus, the 413-residue chain is Divalent metal cation transporter MntH (413 aa).

At 1-19 the chain is on the cytoplasmic side; that stretch reads MTDNRVENSSGRAARKLRL. The chain crosses the membrane as a helical span at residues 20–39; it reads ALMGPAFIAAIGYIDPGNFA. At 40–51 the chain is on the periplasmic side; the sequence is TNIQAGASFGYQ. The chain crosses the membrane as a helical span at residues 52 to 71; sequence LLWVVVWANLMAMLIQILSA. At 72 to 95 the chain is on the cytoplasmic side; the sequence is KLGIATGKNLAEQIRDHYPRPVVW. The chain crosses the membrane as a helical span at residues 96–118; sequence FYWVQAEIIAMATDLAEFIGAAI. The Periplasmic portion of the chain corresponds to 119–125; it reads GFKLILG. The chain crosses the membrane as a helical span at residues 126 to 145; sequence VSLLQGAVLTGIATFLILML. Over 146 to 155 the chain is Cytoplasmic; that stretch reads QRRGQKPLEK. The helical transmembrane segment at 156-175 threads the bilayer; the sequence is VIGGLLLFVAAAYIVELFFS. At 176–196 the chain is on the periplasmic side; the sequence is QPDMAQLGKGMVIPALPNPEA. The helical transmembrane segment at 197–220 threads the bilayer; sequence VFLAAGVLGATIMPHVIYLHSSLT. The Cytoplasmic portion of the chain corresponds to 221–238; that stretch reads QHLHGGTRQQRYSATKWD. Residues 239-258 traverse the membrane as a helical segment; that stretch reads VAIAMTIAGFVNLAMMATAA. Residues 259–276 lie on the Periplasmic side of the membrane; sequence AAFHFSGHTGIADLDQAY. Residues 277–297 form a helical membrane-spanning segment; it reads LTLEPLLSHAAATVFGLSLVA. Residues 298–327 are Cytoplasmic-facing; the sequence is AGLSSTVVGTLAGQVVMQGFVRFHIPLWVR. A helical transmembrane segment spans residues 328–344; it reads RSITMLPSFIVILMGLD. Over 345–350 the chain is Periplasmic; that stretch reads PTRILV. A helical transmembrane segment spans residues 351–370; that stretch reads MSQVLLSFGIALALVPLLIF. The Cytoplasmic segment spans residues 371 to 387; the sequence is TSNATLMGELVNTRRVK. The chain crosses the membrane as a helical span at residues 388–406; that stretch reads QIGWIIVVLVVALNIWLLV. Residues 407–413 are Periplasmic-facing; that stretch reads GTVMGLS.

Belongs to the NRAMP family.

It is found in the cell inner membrane. In terms of biological role, h(+)-stimulated, divalent metal cation uptake system. The polypeptide is Divalent metal cation transporter MntH (Salmonella gallinarum (strain 287/91 / NCTC 13346)).